The following is a 397-amino-acid chain: MDSIIPAGVKLDDLQVILAKNENETRDKVCKQINEARDEILPLRLQFNEFIQIMANIDQEGSKQADRMAKYLHIRDKILQLNDRFQTLSSHLEALQPLFSTVPEYLKTADNRDRSFQLLEPLSTYNKNGNAVCSTATVVSTNHSAAASTPTTTATPHANPITHAHSLSNPNSTATMQHNPLAGKRGPKSGSTMGTPTVHNSTAAAPIAAPKKPRKPRQTKKAKAQAQAQAQAQAQVYAQQSTVQTPITASMAAALPNPTPSMINSVSPTNVMGTPLTNMMSPMGNAYSMGAQNQGGQVSMSQFNGSGNGSNPNTNTNSNNTPLQSQLNLNNLTPANILNMSMNNDFQQQQQQQQQQQQPQPQYNMNMGMNNMNNGGKELDSLDLNNLELGGLNMDFL.

Methionine 1 carries the post-translational modification N-acetylmethionine. Positions 147-165 (ASTPTTTATPHANPITHAH) are enriched in low complexity. 3 disordered regions span residues 147–227 (ASTP…AQAQ), 288–327 (SMGA…QSQL), and 346–370 (FQQQ…MGMN). Composition is skewed to polar residues over residues 166-178 (SLSN…TMQH) and 189-202 (SGST…HNST). Residues 211–223 (KKPRKPRQTKKAK) are compositionally biased toward basic residues. The span at 290–303 (GAQNQGGQVSMSQF) shows a compositional bias: polar residues. Residues 309–322 (GSNPNTNTNSNNTP) are compositionally biased toward low complexity.

It belongs to the mediator complex subunit 3 family. In terms of assembly, component of the Mediator complex, which is composed of at least 21 subunits that form three structurally distinct submodules. The Mediator head module contains MED6, MED8, MED11, SRB4/MED17, SRB5/MED18, ROX3/MED19, SRB2/MED20 and SRB6/MED22, the middle module contains MED1, MED4, NUT1/MED5, MED7, CSE2/MED9, NUT2/MED10, SRB7/MED21 and SOH1/MED31, and the tail module contains MED2, PGD1/MED3, RGR1/MED14, GAL11/MED15 and SIN4/MED16. The head and the middle modules interact directly with RNA polymerase II, whereas the elongated tail module interacts with gene-specific regulatory proteins. PGD1/MED3 interacts directly with the CYC8-TUP1 corepressor proteins.

It localises to the nucleus. Its function is as follows. Component of the Mediator complex, a coactivator involved in the regulated transcription of nearly all RNA polymerase II-dependent genes. Mediator functions as a bridge to convey information from gene-specific regulatory proteins to the basal RNA polymerase II transcription machinery. The Mediator complex, having a compact conformation in its free form, is recruited to promoters by direct interactions with regulatory proteins and serves for the assembly of a functional preinitiation complex with RNA polymerase II and the general transcription factors. The Mediator complex unfolds to an extended conformation and partially surrounds RNA polymerase II, specifically interacting with the unphosphorylated form of the C-terminal domain (CTD) of RNA polymerase II. The Mediator complex dissociates from the RNA polymerase II holoenzyme and stays at the promoter when transcriptional elongation begins. PGD1/MED3 is also involved in direct repeat recombination. The protein is Mediator of RNA polymerase II transcription subunit 3 (PGD1) of Saccharomyces cerevisiae (strain ATCC 204508 / S288c) (Baker's yeast).